The following is a 232-amino-acid chain: Orotidine 5'-phosphate decarboxylase (232 aa).

Substrate contacts are provided by residues Asp11, Lys33, Asp60–Thr69, Thr120, Arg181, Gln190, Gly210, and Arg211. The active-site Proton donor is Lys62.

It belongs to the OMP decarboxylase family. Type 1 subfamily. As to quaternary structure, homodimer.

The catalysed reaction is orotidine 5'-phosphate + H(+) = UMP + CO2. It functions in the pathway pyrimidine metabolism; UMP biosynthesis via de novo pathway; UMP from orotate: step 2/2. Catalyzes the decarboxylation of orotidine 5'-monophosphate (OMP) to uridine 5'-monophosphate (UMP). This Vibrio vulnificus (strain CMCP6) protein is Orotidine 5'-phosphate decarboxylase.